A 372-amino-acid chain; its full sequence is MLLWLFEQLAGYHSSFQVVRYLTLRSLLSVLTSLTIGLVLGPIMIRKLQALKYGQAVSSFAPENHAKKMGTPTMGGILILLSIGISTLLWADLSNPYVWIVLGVMVVFGAVGWADDWIKIRYKDNAGLPARKKFFWTSVASLGAGIALYLIATQQSNAEYTANMLDLLIPFFKNLSIPLSIVPLGLAFIVFTYLVINGASNAVNLTDGLDGLAIMPVVMVATGLGVFAYLSGDIRFANYLHIPYVKYTSELVVICSAMIGAGLAFLWYNAHPAQVFMGDVGALALGAMLGTIAVMVRQEIVFAIMGGVFVMEAVSVFLQIGSLRMRNKRVFLMAPLHHHYEKQGWKETQVVIRFWIITIMLVVLGLMTLKLR.

10 helical membrane passes run 25–45 (RSLLSVLTSLTIGLVLGPIMI), 73–93 (TMGGILILLSIGISTLLWADL), 98–118 (VWIVLGVMVVFGAVGWADDWI), 134–154 (FFWTSVASLGAGIALYLIATQ), 176–196 (SIPLSIVPLGLAFIVFTYLVI), 211–231 (GLAIMPVVMVATGLGVFAYLS), 251–271 (LVVICSAMIGAGLAFLWYNAH), 275–295 (VFMGDVGALALGAMLGTIAVM), 300–320 (IVFAIMGGVFVMEAVSVFLQI), and 349–369 (QVVIRFWIITIMLVVLGLMTL).

This sequence belongs to the glycosyltransferase 4 family. MraY subfamily. Mg(2+) is required as a cofactor.

Its subcellular location is the cell inner membrane. The enzyme catalyses UDP-N-acetyl-alpha-D-muramoyl-L-alanyl-gamma-D-glutamyl-meso-2,6-diaminopimeloyl-D-alanyl-D-alanine + di-trans,octa-cis-undecaprenyl phosphate = di-trans,octa-cis-undecaprenyl diphospho-N-acetyl-alpha-D-muramoyl-L-alanyl-D-glutamyl-meso-2,6-diaminopimeloyl-D-alanyl-D-alanine + UMP. It functions in the pathway cell wall biogenesis; peptidoglycan biosynthesis. In terms of biological role, catalyzes the initial step of the lipid cycle reactions in the biosynthesis of the cell wall peptidoglycan: transfers peptidoglycan precursor phospho-MurNAc-pentapeptide from UDP-MurNAc-pentapeptide onto the lipid carrier undecaprenyl phosphate, yielding undecaprenyl-pyrophosphoryl-MurNAc-pentapeptide, known as lipid I. The sequence is that of Phospho-N-acetylmuramoyl-pentapeptide-transferase from Acinetobacter baumannii (strain AB0057).